Consider the following 639-residue polypeptide: Protein zwilch homolog (639 aa).

The span at 76–95 shows a compositional bias: basic and acidic residues; that stretch reads QKTSSLLNRRENKKTIKSEK. The interval 76 to 116 is disordered; that stretch reads QKTSSLLNRRENKKTIKSEKEDESMDMETAEGDKENTVSET. Over residues 96 to 105 the composition is skewed to acidic residues; that stretch reads EDESMDMETA.

It belongs to the ZWILCH family. In terms of assembly, component of the RZZ complex composed of rod-1, czw-1 and zwl-1. Interacts with the spindly-like protein spdl-1. Interacts with NDC80 complex component ndc-80.

It localises to the cytoplasm. The protein localises to the cell cortex. The protein resides in the chromosome. It is found in the centromere. Its subcellular location is the kinetochore. It localises to the cytoskeleton. The protein localises to the spindle. Its function is as follows. Essential component of the mitotic checkpoint, which prevents cells from prematurely exiting mitosis. Required for chromosome segregation, the assembly of the dynein-dynactin and mdf-1-mdf-2 complexes onto kinetochores and spindle pole separation. Its function related to the spindle assembly machinery and kinetochore-microtubule attachments likely depends on its association in the mitotic RZZ complex. The RZZ complex recruits the spindly-like protein spdl-1 to kinetochores. To prevent irregular chromosome segregation, the complex also inhibits the attachment of the kinetochore-associated NDC80 complex to microtubules. The recruitment of spdl-1 to kinetochores relieves this inhibition. Required for embryonic development. The sequence is that of Protein zwilch homolog (zwl-1) from Caenorhabditis briggsae.